A 149-amino-acid polypeptide reads, in one-letter code: MRTFSPKPSDIQRQWHVIDASDVVLGRLASRVATLLRGKHKPYYAPHVDTGDYVIVVNADKVVLTGKKLEQKRAYRHSGYPGGLRSIPYSELMAKNPARAVEKAVKGMLPKNSLGRRMAKKLKVYAGPEHPHQAQKPVPYEITKIKQPA.

The protein belongs to the universal ribosomal protein uL13 family. Part of the 50S ribosomal subunit.

Functionally, this protein is one of the early assembly proteins of the 50S ribosomal subunit, although it is not seen to bind rRNA by itself. It is important during the early stages of 50S assembly. This is Large ribosomal subunit protein uL13 from Thermobifida fusca (strain YX).